The chain runs to 552 residues: Transcription factor kayak (552 aa).

Disordered regions lie at residues 110–145 and 177–234; these read LAQG…TDST and GAAS…KRRV. Over residues 111–127 the composition is skewed to polar residues; the sequence is AQGSDSEDSNASYNDTQ. Low complexity predominate over residues 135-145; sequence TDTSSAHTDST. The segment covering 177 to 192 has biased composition (polar residues); sequence GAASVGSSNANTSNTP. Residues 212–275 form the bZIP domain; the sequence is EQKRAVRRER…NQLEYCLAAH (64 aa). Positions 214–233 are basic motif; that stretch reads KRAVRRERNKQAAARCRKRR. The interval 240–247 is leucine-zipper; that stretch reads LTEEVEQL. A compositionally biased stretch (low complexity) spans 304–325; that stretch reads AGSSGSGASSHHNHNSNDSSNG. 3 disordered regions span residues 304-346, 365-390, and 514-552; these read AGSS…PLDL, LDGA…TLPP, and GGTG…LVSL. Residues 333–343 are compositionally biased toward polar residues; it reads TLNSTGRSNSP. The residue at position 342 (Ser-342) is a Phosphoserine.

Belongs to the bZIP family. Fos subfamily. Homodimer. Heterodimer with Jra. The kay-Jra heterodimer binds more stably to the AP-1 site than either of the two proteins alone.

The protein resides in the nucleus. Its function is as follows. Developmentally regulated transcription factor AP-1 binds and recognizes the enhancer DNA sequence: 5'-TGA[CG]TCA-3'. May play a role in the function or determination of a particular subset of cells in the developing embryo. It is able to carry out its function either independently of or in conjunction with Jra. The polypeptide is Transcription factor kayak (Drosophila yakuba (Fruit fly)).